A 282-amino-acid polypeptide reads, in one-letter code: WRKY transcription factor 71 (282 aa).

A disordered region spans residues 63 to 121 (LTSNSPVVSSSSNEGEPKENTNDKSDQMEDNEGDLHGVGESSKQLTKQGKKKGEKKERE). The segment covering 65–75 (SNSPVVSSSSN) has biased composition (low complexity). The segment covering 77 to 99 (GEPKENTNDKSDQMEDNEGDLHG) has biased composition (basic and acidic residues). The segment at residues 130–195 (SEIDHLEDGY…YEGKHNHPIP (66 aa)) is a DNA-binding region (WRKY).

This sequence belongs to the WRKY group II-c family.

The protein localises to the nucleus. Transcription factor. Interacts specifically with the W box (5'-(T)TGAC[CT]-3'), a frequently occurring elicitor-responsive cis-acting element. This chain is WRKY transcription factor 71 (WRKY71), found in Arabidopsis thaliana (Mouse-ear cress).